Here is a 127-residue protein sequence, read N- to C-terminus: Small ribosomal subunit protein bS6 (127 aa).

This sequence belongs to the bacterial ribosomal protein bS6 family.

Binds together with bS18 to 16S ribosomal RNA. This is Small ribosomal subunit protein bS6 from Acinetobacter baumannii (strain AB0057).